The chain runs to 99 residues: Small ribosomal subunit protein bS20 (99 aa).

Belongs to the bacterial ribosomal protein bS20 family.

Its function is as follows. Binds directly to 16S ribosomal RNA. This chain is Small ribosomal subunit protein bS20, found in Cyanothece sp. (strain PCC 7425 / ATCC 29141).